A 332-amino-acid polypeptide reads, in one-letter code: F-box/SPRY domain-containing protein 1 (332 aa).

The disordered stretch occupies residues 1 to 82; the sequence is MAENDGETIV…RSPRRPEVSA (82 aa). Composition is skewed to polar residues over residues 15 to 28 and 49 to 64; these read CNLTASTPMKSSGL and NPSSGTPDESPKQLTP. One can recognise an F-box domain in the interval 79-127; the sequence is EVSASRLPLKVLNQIFQYLPLKDLRSAMLTCHSWNNALSMEDSDIWQYL. The region spanning 138-330 is the B30.2/SPRY domain; the sequence is SDPFLLAELG…VTMVYVGSPQ (193 aa).

It belongs to the FBXO45/Fsn family. As to quaternary structure, component of an SCF (SKP1-CUL1-F-box protein) E3 ubiquitin ligase complex composed of cul-1, fsn-1, rpm-1 and skr-1. Interacts (via SPRY domain) with scd-2 (via cytoplasmic domain). Interacts (via SPRY domain) with convertase egl-3 (via C-terminus). Expressed in GABAergic neuromuscular junctions (NMJs).

It localises to the synapse. The protein operates within protein modification; protein ubiquitination. Component of a SCF (SKP1-CUL1-F-box protein) E3 ubiquitin ligase complex which is required for the restriction and/or maturation of synapses in GABAergic neuromuscular junction (NMJ) presynaptic neurons. Promotes NRJ synapse development and synaptic transmission by negatively regulating the daf-2/InsR pathway in muscles. By targeting convertase egl-3 for degradation, negatively modulates insulin-like protein ins-4 and ins-6 processing. May stabilize synapse formation by promoting the down-regulation of scd-2. Regulates axon termination in PLM and ALM neurons. The chain is F-box/SPRY domain-containing protein 1 (fsn-1) from Caenorhabditis elegans.